The sequence spans 470 residues: MNKLVSLAKRRGFIFPSSEIYGGLSSCFDYGPLGSEMKKNIKDLWWNAMTRRHQNIVGIDASIMMNPTVWEASGHVASFNDPMIDDKTTKRRYRADHLIENHIEKLHRDGKEAEAAAIKVAYEAAGGTEDPNRTLYNIIIEAGIKAPDTGSADWTEVRQFNLMFQCNMGAVADSAGVVYLRPETAQGIFVNFHNVREASRMKVPFGIAQIGKAFRNEIVKGNFIFRMVEFEQMEMQYFVKPGTQLEAFEAWREERFRWYSETLGMSKEKLHWYKHDKLAHYADLAYDIKFEFPFGIEEIEGIHSRTDFDLSQHQKYSGKSMEYIDQTTNERYIPYVVETSSGCDRTFLALLSDAYQEDVVDGEPRVMLKLAPKVAPVKAAVLPLMKKGEMGEKAAQLCRDLSESFMVQYDDAASIGKRYRRQDEIGTPFCFTVDHDTLENGTITVRYRDTAAQERINMSKAAEFLATKLM.

Positions 94 and 183 each coordinate substrate. Residues 215–217, 225–230, 298–299, and 342–345 contribute to the ATP site; these read RNE, FRMVEF, EI, and GCDR. 230-234 contacts substrate; it reads FEQME. 338–342 contributes to the substrate binding site; that stretch reads ETSSG.

Belongs to the class-II aminoacyl-tRNA synthetase family. Homodimer.

The protein resides in the cytoplasm. The enzyme catalyses tRNA(Gly) + glycine + ATP = glycyl-tRNA(Gly) + AMP + diphosphate. Functionally, catalyzes the attachment of glycine to tRNA(Gly). This Chlorobaculum tepidum (strain ATCC 49652 / DSM 12025 / NBRC 103806 / TLS) (Chlorobium tepidum) protein is Glycine--tRNA ligase.